The following is a 301-amino-acid chain: 5'-3' exonuclease (301 aa).

Residues 182–264 (GYADLALLRG…RVAADVPLPD (83 aa)) enclose the 5'-3' exonuclease domain.

Its function is as follows. 5'-3' exonuclease acting preferentially on double-stranded DNA. The polypeptide is 5'-3' exonuclease (Streptomyces coelicolor (strain ATCC BAA-471 / A3(2) / M145)).